The following is a 700-amino-acid chain: Putative proline-rich receptor-like protein kinase PERK6 (700 aa).

Positions 1-180 (MAEGQSPENS…SGGGSNSSGN (180 aa)) are disordered. Topologically, residues 1–186 (MAEGQSPENS…SSGNNEPNTA (186 aa)) are extracellular. Pro residues-rich tracts occupy residues 9-19 (NSPPSPTPPSP) and 29-47 (SPPPSDSSSPSPPAPPPPD). The span at 48–137 (DSSNGSPQPP…GNNNDNNNQN (90 aa)) shows a compositional bias: low complexity. N-linked (GlcNAc...) asparagine glycosylation is present at asparagine 176. A helical transmembrane segment spans residues 187-207 (AIVGIVAGAGLLFLVMILFCV). At 208–700 (CCCRKKKKKH…NNKTTPSRDH (493 aa)) the chain is on the cytoplasmic side. The disordered stretch occupies residues 249–315 (NLSQQYPGSN…GPSVPPPHPS (67 aa)). The span at 255–265 (PGSNGNNNWMN) shows a compositional bias: low complexity. Over residues 266 to 286 (SPPPPPPGSWQPSPPPPPPPV) the composition is skewed to pro residues. Threonine 326 carries the phosphothreonine modification. Residues 337–615 (FSQSRLLGQG…VRALEGDATL (279 aa)) enclose the Protein kinase domain. Residues 343–351 (LGQGGFGYV) and lysine 365 contribute to the ATP site. Tyrosine 410 carries the post-translational modification Phosphotyrosine. Aspartate 461 functions as the Proton acceptor in the catalytic mechanism. Phosphoserine is present on residues serine 465 and serine 494. 2 positions are modified to phosphothreonine: threonine 495 and threonine 500. Tyrosine 508 carries the post-translational modification Phosphotyrosine. Disordered regions lie at residues 616–642 (DDLSEGGKAGQSSFLGRGSSSDYDSST) and 659–700 (EYGA…SRDH). Over residues 689-700 (ANNNKTTPSRDH) the composition is skewed to polar residues.

Belongs to the protein kinase superfamily. Ser/Thr protein kinase family. As to expression, mostly expressed in flower buds.

Its subcellular location is the cell membrane. It catalyses the reaction L-seryl-[protein] + ATP = O-phospho-L-seryl-[protein] + ADP + H(+). The catalysed reaction is L-threonyl-[protein] + ATP = O-phospho-L-threonyl-[protein] + ADP + H(+). The chain is Putative proline-rich receptor-like protein kinase PERK6 (PERK6) from Arabidopsis thaliana (Mouse-ear cress).